Here is a 376-residue protein sequence, read N- to C-terminus: Putative F-box protein At1g53370 (376 aa).

Residues 22–71 (RNYIDSIPVDLLIDILSRFPPKSIARFYCVSKLWESILRGPDFTELYLTK) form the F-box domain.

In Arabidopsis thaliana (Mouse-ear cress), this protein is Putative F-box protein At1g53370.